The following is a 256-amino-acid chain: Triosephosphate isomerase (256 aa).

Residue Asn-9–Lys-11 coordinates substrate. His-95 functions as the Electrophile in the catalytic mechanism. Glu-167 (proton acceptor) is an active-site residue. Substrate-binding positions include Gly-173, Ser-212, and Gly-233–Gly-234.

Belongs to the triosephosphate isomerase family. In terms of assembly, homodimer.

Its subcellular location is the cytoplasm. It carries out the reaction D-glyceraldehyde 3-phosphate = dihydroxyacetone phosphate. The protein operates within carbohydrate biosynthesis; gluconeogenesis. Its pathway is carbohydrate degradation; glycolysis; D-glyceraldehyde 3-phosphate from glycerone phosphate: step 1/1. In terms of biological role, involved in the gluconeogenesis. Catalyzes stereospecifically the conversion of dihydroxyacetone phosphate (DHAP) to D-glyceraldehyde-3-phosphate (G3P). This chain is Triosephosphate isomerase, found in Proteus mirabilis (strain HI4320).